The chain runs to 254 residues: tRNA uridine(34) hydroxylase (254 aa).

Positions 123-217 (QDPNVILLDT…YLESIPESES (95 aa)) constitute a Rhodanese domain. The active-site Cysteine persulfide intermediate is the C177.

Belongs to the TrhO family.

The enzyme catalyses uridine(34) in tRNA + AH2 + O2 = 5-hydroxyuridine(34) in tRNA + A + H2O. Its function is as follows. Catalyzes oxygen-dependent 5-hydroxyuridine (ho5U) modification at position 34 in tRNAs. This chain is tRNA uridine(34) hydroxylase, found in Legionella pneumophila (strain Paris).